A 430-amino-acid chain; its full sequence is Glutamate-1-semialdehyde 2,1-aminomutase (430 aa).

N6-(pyridoxal phosphate)lysine is present on Lys265.

The protein belongs to the class-III pyridoxal-phosphate-dependent aminotransferase family. HemL subfamily. Homodimer. Pyridoxal 5'-phosphate is required as a cofactor.

The protein localises to the cytoplasm. The catalysed reaction is (S)-4-amino-5-oxopentanoate = 5-aminolevulinate. Its pathway is porphyrin-containing compound metabolism; protoporphyrin-IX biosynthesis; 5-aminolevulinate from L-glutamyl-tRNA(Glu): step 2/2. The protein is Glutamate-1-semialdehyde 2,1-aminomutase (hemL) of Helicobacter pylori (strain J99 / ATCC 700824) (Campylobacter pylori J99).